Reading from the N-terminus, the 1906-residue chain is Zinc metalloprotease ZmpB (1906 aa).

The signal sequence occupies residues 1–33 (MFKKDRFSIRKIKGVVGSVFLGSLLMAPSVVDA). Residues 34–76 (ATYHYVNKEIISQEAKDLIQTGKPDRNEVVYGLVYQKDQLPQT) constitute a propeptide that is removed on maturation. The short motif at 73–77 (LPQTG) is the LPXTG sorting signal element. A Pentaglycyl murein peptidoglycan amidated threonine modification is found at Thr76. Transmembrane regions (helical) follow at residues 77-98 (GTEA…LLIY) and 105-127 (SVFL…DPVA). The Extracellular portion of the chain corresponds to 128–1906 (TLALASREGV…TNSFKTSIFK (1779 aa)). The tract at residues 178–436 (VETPQSITNQ…KASSVSPTDY (259 aa)) is disordered. The span at 181–196 (PQSITNQEQARTENQV) shows a compositional bias: polar residues. Composition is skewed to basic and acidic residues over residues 201-239 (EAPK…KEDS), 252-262 (VESKPEEKVAV), 271-335 (KPAE…KEET), 352-375 (KQTE…REDE), and 383-408 (EPEK…DKIK). A run of 4 repeats spans residues 277-291 (KVEQ…REDE), 293-315 (APVE…ETPK), 361-375 (KVEQ…REDE), and 380-402 (APVE…ETPK). A 2 X 15 AA repeats of K-V-E-Q-A-G-E-P-V-A-P-R-E-D-E region spans residues 277–375 (KVEQAGEPVA…GEPVAPREDE (99 aa)). The interval 293 to 375 (APVEPEKQPE…GEPVAPREDE (83 aa)) is 2 X 23 AA approximate repeats. The segment covering 421-436 (LNNQIDKASSVSPTDY) has biased composition (polar residues). Residue His1562 participates in Zn(2+) binding. Glu1563 is an active-site residue. Zn(2+) is bound by residues His1566 and Glu1586.

It belongs to the peptidase M26 family. Zn(2+) serves as cofactor. Post-translationally, the Gram-positive cell-wall anchor motif LPXTG is located in the N-terminal part, in contrast to such motifs in other known streptococcal and staphylococcal proteins. The protease could be cleaved by the sortase and anchored in the membrane via the two potential N-terminal transmembrane domains, whereas the propeptide located prior to the LPXTG motif would remain attached to the cell wall peptidoglycan by an amide bond.

It is found in the secreted. It localises to the cell wall. The protein localises to the membrane. Is a virulence factor capable of inducing inflammation in the lower respiratory tract, by increasing tumor necrosis factor alpha (TNF-alpha) concentration in the lungs. Also appears to have other functions important in virulence in models of pneumonia and septicemia. The polypeptide is Zinc metalloprotease ZmpB (zmpB) (Streptococcus pneumoniae serotype 4 (strain ATCC BAA-334 / TIGR4)).